The following is a 120-amino-acid chain: Large ribosomal subunit protein uL18 (120 aa).

This sequence belongs to the universal ribosomal protein uL18 family. In terms of assembly, part of the 50S ribosomal subunit; part of the 5S rRNA/L5/L18/L25 subcomplex. Contacts the 5S and 23S rRNAs.

This is one of the proteins that bind and probably mediate the attachment of the 5S RNA into the large ribosomal subunit, where it forms part of the central protuberance. The chain is Large ribosomal subunit protein uL18 from Bacillus pumilus (strain SAFR-032).